We begin with the raw amino-acid sequence, 259 residues long: DNA-directed RNA polymerase 30 kDa polypeptide (259 aa).

Residues 155–195 (YNTPCPNCKSRNTTPMMIQTRAADEPPLVRHACRDCKQHFK) form a TFIIS-type zinc finger. Residues cysteine 159, cysteine 162, cysteine 187, and cysteine 190 each coordinate Zn(2+). Positions 220–259 (EILPDNNPSPPESPEPASPIDDGLIRATFDRNDEPPEDDE) are disordered. Residues 226–236 (NPSPPESPEPA) show a composition bias toward pro residues.

It belongs to the poxviridae DNA-directed RNA polymerase 30 kDa subunit family. As to quaternary structure, the DNA-dependent RNA polymerase (vRNAP) consists of eight subunits encoded by early viral genes and termed according to their apparent molecular masses Rpo147, Rpo132, Rpo35, Rpo30, Rpo22, Rpo19, Rpo18, and Rpo7. The same holoenzyme, with the addition of the transcription-specificity factor RAP94, is used for early gene expression.

It is found in the virion. The protein resides in the host cytoplasm. It catalyses the reaction RNA(n) + a ribonucleoside 5'-triphosphate = RNA(n+1) + diphosphate. Part of the DNA-dependent RNA polymerase which catalyzes the transcription of viral DNA into RNA using the four ribonucleoside triphosphates as substrates. Responsible for the transcription of early, intermediate and late genes. DNA-dependent RNA polymerase associates with the early transcription factor (ETF), itself composed of OPG118 and OPG134, thereby allowing the early genes transcription. Late transcription, and probably also intermediate transcription, require newly synthesized RNA polymerase. The polypeptide is DNA-directed RNA polymerase 30 kDa polypeptide (OPG066) (Bos taurus (Bovine)).